We begin with the raw amino-acid sequence, 172 residues long: Shikimate kinase (172 aa).

14–19 (GAGKST) is a binding site for ATP. Ser-18 contributes to the Mg(2+) binding site. Residues Asp-36, Arg-60, and Gly-82 each contribute to the substrate site. An ATP-binding site is contributed by Arg-120. Arg-140 is a binding site for substrate.

It belongs to the shikimate kinase family. Monomer. Mg(2+) is required as a cofactor.

It localises to the cytoplasm. The enzyme catalyses shikimate + ATP = 3-phosphoshikimate + ADP + H(+). It functions in the pathway metabolic intermediate biosynthesis; chorismate biosynthesis; chorismate from D-erythrose 4-phosphate and phosphoenolpyruvate: step 5/7. Its function is as follows. Catalyzes the specific phosphorylation of the 3-hydroxyl group of shikimic acid using ATP as a cosubstrate. The protein is Shikimate kinase of Tolumonas auensis (strain DSM 9187 / NBRC 110442 / TA 4).